The chain runs to 158 residues: Small ribosomal subunit protein uS7 (158 aa).

It belongs to the universal ribosomal protein uS7 family. In terms of assembly, part of the 30S ribosomal subunit. Contacts proteins S9 and S11.

Its function is as follows. One of the primary rRNA binding proteins, it binds directly to 16S rRNA where it nucleates assembly of the head domain of the 30S subunit. Is located at the subunit interface close to the decoding center, probably blocks exit of the E-site tRNA. This is Small ribosomal subunit protein uS7 from Flavobacterium psychrophilum (strain ATCC 49511 / DSM 21280 / CIP 103535 / JIP02/86).